Reading from the N-terminus, the 355-residue chain is UDP-3-O-acylglucosamine N-acyltransferase (355 aa).

The Proton acceptor role is filled by histidine 258.

It belongs to the transferase hexapeptide repeat family. LpxD subfamily. In terms of assembly, homotrimer.

The catalysed reaction is a UDP-3-O-[(3R)-3-hydroxyacyl]-alpha-D-glucosamine + a (3R)-hydroxyacyl-[ACP] = a UDP-2-N,3-O-bis[(3R)-3-hydroxyacyl]-alpha-D-glucosamine + holo-[ACP] + H(+). It participates in bacterial outer membrane biogenesis; LPS lipid A biosynthesis. Catalyzes the N-acylation of UDP-3-O-acylglucosamine using 3-hydroxyacyl-ACP as the acyl donor. Is involved in the biosynthesis of lipid A, a phosphorylated glycolipid that anchors the lipopolysaccharide to the outer membrane of the cell. This chain is UDP-3-O-acylglucosamine N-acyltransferase, found in Rhizobium rhizogenes (strain K84 / ATCC BAA-868) (Agrobacterium radiobacter).